The primary structure comprises 480 residues: Glutamate--tRNA ligase (480 aa).

The short motif at 21–31 (PSPTGYLHVGG) is the 'HIGH' region element. Cysteine 110, cysteine 112, cysteine 137, and histidine 139 together coordinate Zn(2+). Positions 248-252 (KLSKR) match the 'KMSKS' region motif. An ATP-binding site is contributed by lysine 251.

It belongs to the class-I aminoacyl-tRNA synthetase family. Glutamate--tRNA ligase type 1 subfamily. In terms of assembly, monomer. It depends on Zn(2+) as a cofactor.

The protein resides in the cytoplasm. It carries out the reaction tRNA(Glu) + L-glutamate + ATP = L-glutamyl-tRNA(Glu) + AMP + diphosphate. Functionally, catalyzes the attachment of glutamate to tRNA(Glu) in a two-step reaction: glutamate is first activated by ATP to form Glu-AMP and then transferred to the acceptor end of tRNA(Glu). In Actinobacillus succinogenes (strain ATCC 55618 / DSM 22257 / CCUG 43843 / 130Z), this protein is Glutamate--tRNA ligase.